Consider the following 107-residue polypeptide: Defensin-like protein 242 (107 aa).

Residues 1–22 (MKVVAIFLASCVLFSLIPTHLS) form the signal peptide. 4 cysteine pairs are disulfide-bonded: Cys-45-Cys-100, Cys-55-Cys-84, Cys-65-Cys-94, and Cys-82-Cys-96.

It belongs to the DEFL family.

It is found in the secreted. In Arabidopsis thaliana (Mouse-ear cress), this protein is Defensin-like protein 242 (SCRL10).